The chain runs to 442 residues: Cyclic 2,3-diphosphoglycerate synthetase (442 aa).

This sequence belongs to the cyclic 2,3-diphosphoglycerate synthetase family.

The protein localises to the cytoplasm. It catalyses the reaction (2R)-2,3-bisphosphoglycerate + ATP + H(+) = cyclic (2R)-2,3-bisphosphoglycerate + ADP + phosphate. In terms of biological role, catalyzes the formation of cyclic 2,3-diphosphoglycerate (cDPG) by formation of an intramolecular phosphoanhydride bond at the expense of ATP. This chain is Cyclic 2,3-diphosphoglycerate synthetase, found in Rubrobacter xylanophilus (strain DSM 9941 / JCM 11954 / NBRC 16129 / PRD-1).